The primary structure comprises 219 residues: Orotate phosphoribosyltransferase (219 aa).

Lys26 provides a ligand contact to 5-phospho-alpha-D-ribose 1-diphosphate. 34 to 35 (FF) serves as a coordination point for orotate. 5-phospho-alpha-D-ribose 1-diphosphate contacts are provided by residues 72-73 (YK), Arg98, Lys99, Lys102, His104, and 124-132 (DDVITAGTA). 2 residues coordinate orotate: Thr128 and Arg156.

This sequence belongs to the purine/pyrimidine phosphoribosyltransferase family. PyrE subfamily. In terms of assembly, homodimer. Mg(2+) serves as cofactor.

The catalysed reaction is orotidine 5'-phosphate + diphosphate = orotate + 5-phospho-alpha-D-ribose 1-diphosphate. It participates in pyrimidine metabolism; UMP biosynthesis via de novo pathway; UMP from orotate: step 1/2. In terms of biological role, catalyzes the transfer of a ribosyl phosphate group from 5-phosphoribose 1-diphosphate to orotate, leading to the formation of orotidine monophosphate (OMP). The protein is Orotate phosphoribosyltransferase of Xylella fastidiosa (strain M23).